The following is a 412-amino-acid chain: MNDLIINHIAELILPRSTDKPLKGKELDELNVVKNGTVVIKDGKIVYAGTHTDDYDATETIDASGKVVSPALVDAHTHLTFGGSREHEMSLKRQGKSYLEILEMGGGILSTVNATRETSEDDLFKKAEHDLLTMIKHGVLAVESKSGYGLDRENELKQLKVSNRLAEKYDLDMKHTFLGPHAVPKEASSNEAFLEEMIALLPEVKHYADFADIFCETGVFTIEQSQHYMQKAKEAGFKVKIHADEIDPLGGLELAIDEQAISADHLVASSDKGKEKLRNSDTVAVLLPATTLYLGKEDYADARGMLDNNGAIALATDYNPGSSVTNNIQLVMAIAALKLKLSPNEVWNAVTVNAAKAIDINAGTINTGDKANLVIWDAPNHEYIPYHFGINHAEKVIKDGKVIVDNTLSFKV.

Fe(3+)-binding residues include His-76 and His-78. Zn(2+)-binding residues include His-76 and His-78. Positions 85, 148, and 181 each coordinate 4-imidazolone-5-propanoate. Tyr-148 contacts N-formimidoyl-L-glutamate. His-242 is a Fe(3+) binding site. His-242 serves as a coordination point for Zn(2+). Glu-245 is a 4-imidazolone-5-propanoate binding site. Residue Asp-317 coordinates Fe(3+). Asp-317 is a binding site for Zn(2+). Residues Asn-319 and Gly-321 each contribute to the N-formimidoyl-L-glutamate site. Ser-322 contacts 4-imidazolone-5-propanoate.

The protein belongs to the metallo-dependent hydrolases superfamily. HutI family. Zn(2+) is required as a cofactor. The cofactor is Fe(3+).

The protein localises to the cytoplasm. It carries out the reaction 4-imidazolone-5-propanoate + H2O = N-formimidoyl-L-glutamate. It functions in the pathway amino-acid degradation; L-histidine degradation into L-glutamate; N-formimidoyl-L-glutamate from L-histidine: step 3/3. Functionally, catalyzes the hydrolytic cleavage of the carbon-nitrogen bond in imidazolone-5-propanoate to yield N-formimidoyl-L-glutamate. It is the third step in the universal histidine degradation pathway. This chain is Imidazolonepropionase, found in Staphylococcus aureus (strain MRSA252).